The sequence spans 185 residues: Nodulin-20 (185 aa).

A signal peptide spans 1–17; it reads MRVVLITLFLFIGAAVA.

It belongs to the nodulin 20 family.

The protein localises to the symbiosome. The protein resides in the peribacteroid membrane. It localises to the peribacteroid space. This is Nodulin-20 from Glycine max (Soybean).